A 77-amino-acid chain; its full sequence is MKLIIFTGLVLFAIVSLIEAQAENEKACLPQYQVCTDAPGNCCSDLVCDCYGRYKCGARIGRNCFCLQKGVIYKREN.

A signal peptide spans 1–20 (MKLIIFTGLVLFAIVSLIEA). A propeptide spanning residues 21–26 (QAENEK) is cleaved from the precursor.

Belongs to the neurotoxin 19 (CSTX) family. 08 (U8-Lctx) subfamily. Contains 4 disulfide bonds. In terms of tissue distribution, expressed by the venom gland.

Its subcellular location is the secreted. The sequence is that of U8-lycotoxin-Ls1a from Lycosa singoriensis (Wolf spider).